Reading from the N-terminus, the 270-residue chain is Phosphoserine phosphatase (270 aa).

Catalysis depends on Asp67, which acts as the Nucleophile. Mg(2+) contacts are provided by Asp67 and Asp69. The active-site Proton donor is Asp69. Residues Glu76, Arg112, 156–157, and Lys205 each bind substrate; that span reads SG. Asp227 contacts Mg(2+).

Belongs to the HAD-like hydrolase superfamily. SerB family. It depends on Mg(2+) as a cofactor.

It catalyses the reaction O-phospho-L-serine + H2O = L-serine + phosphate. The catalysed reaction is O-phospho-D-serine + H2O = D-serine + phosphate. Its pathway is amino-acid biosynthesis; L-serine biosynthesis; L-serine from 3-phospho-D-glycerate: step 3/3. Catalyzes the last step in the biosynthesis of serine from carbohydrates. The reaction mechanism proceeds via the formation of a phosphoryl-enzyme intermediates. In Drosophila melanogaster (Fruit fly), this protein is Phosphoserine phosphatase (aay).